A 295-amino-acid chain; its full sequence is MAECCVPVCPRPMCIPPPYADLGKAARDIFNKGFGFGLVKLDVKTKSCSGVEFSTSGSSNTDTGKVSGTLETKYKWCEYGLTFTEKWNTDNTLGTEIAIEDQICQGLKLTFDTTFSPNTGKKSGKIKSAYKRECINLGCDVDFDFAGPAIHGSAVFGYEGWLAGYQMTFDSAKSKLTRSNFAVGYRTGDFQLHTNVNNGTEFGGSIYQKVCEDFDTSVNLAWTSGTNCTRFGIAAKYQLDPTASISAKVNNSSLIGVGYTQTLRPGVKLTLSALVDGKSFNAGGHKLGLALELEA.

ATP-binding residues include lysine 24 and lysine 32. Lysine 32 carries the post-translational modification N6-acetyllysine; alternate. Lysine 32 carries the N6-succinyllysine; alternate modification. A Glycyl lysine isopeptide (Lys-Gly) (interchain with G-Cter in ubiquitin); alternate cross-link involves residue lysine 32. 2 consecutive transmembrane segments (beta stranded) span residues 38–45 (LVKLDVKT) and 51–60 (VEFSTSGSSN). Lysine 65 participates in a covalent cross-link: Glycyl lysine isopeptide (Lys-Gly) (interchain with G-Cter in ubiquitin). Residues 66–76 (VSGTLETKYKW) traverse the membrane as a beta stranded segment. Tyrosine 79 carries the post-translational modification Phosphotyrosine. The next 3 beta stranded transmembrane spans lie at 81–88 (LTFTEKWN), 92–100 (TLGTEIAIE), and 107–116 (LKLTFDTTFS). Threonine 119 carries the post-translational modification Phosphothreonine. Lysine 121 carries the N6-acetyllysine; alternate modification. Lysine 121 participates in a covalent cross-link: Glycyl lysine isopeptide (Lys-Gly) (interchain with G-Cter in ubiquitin); alternate. A Glycyl lysine isopeptide (Lys-Gly) (interchain with G-Cter in ubiquitin) cross-link involves residue lysine 122. Beta stranded transmembrane passes span 122 to 131 (KSGKIKSAYK), 135 to 144 (INLGCDVDFD), 148 to 157 (PAIHGSAVFG), and 161 to 170 (WLAGYQMTFD). Lysine 173 is covalently cross-linked (Glycyl lysine isopeptide (Lys-Gly) (interchain with G-Cter in ubiquitin)). A run of 6 beta stranded transmembrane segments spans residues 177–187 (TRSNFAVGYRT), 190–197 (FQLHTNVN), 201–210 (EFGGSIYQKV), 214–222 (FDTSVNLAW), 229–238 (TRFGIAAKYQ), and 243–250 (ASISAKVN). At serine 252 the chain carries Phosphoserine. NAD(+) is bound by residues 254-256 (LIG) and 272-276 (SALVD). Beta stranded transmembrane passes span 254–263 (LIGVGYTQTL) and 267–275 (VKLTLSALV). An N6-acetyllysine; alternate modification is found at lysine 278. A Glycyl lysine isopeptide (Lys-Gly) (interchain with G-Cter in ubiquitin); alternate cross-link involves residue lysine 278. A beta stranded membrane pass occupies residues 285-295 (HKLGLALELEA).

The protein belongs to the eukaryotic mitochondrial porin family. As to quaternary structure, monomer, homodimer and higher order oligomers; formation of higher order structures is necessary for scramblase activity. Interacts with ARMC12 in a TBC1D21-dependent manner. Interacts with KLC3. Interacts with SPATA33. Interacts with PPP3CC in a SPATA33-dependent manner. In terms of processing, ubiquitinated by PRKN during mitophagy, leading to its degradation and enhancement of mitophagy. Deubiquitinated by USP30. Highest levels of expression detected in testis, less but still abundant expression in heart, kidney, brain, and skeletal muscle. Expressed in the sperm midpiece (at protein level).

The protein localises to the mitochondrion outer membrane. It localises to the membrane. The catalysed reaction is chloride(in) = chloride(out). It carries out the reaction K(+)(in) = K(+)(out). It catalyses the reaction a 1,2-diacyl-sn-glycero-3-phospho-L-serine(in) = a 1,2-diacyl-sn-glycero-3-phospho-L-serine(out). The enzyme catalyses a 1,2-diacyl-sn-glycero-3-phosphocholine(in) = a 1,2-diacyl-sn-glycero-3-phosphocholine(out). The catalysed reaction is a 1,2-diacyl-sn-glycero-3-phospho-(1D-myo-inositol)(in) = a 1,2-diacyl-sn-glycero-3-phospho-(1D-myo-inositol)(out). Its function is as follows. Non-selective voltage-gated ion channel that mediates the transport of anions and cations through the mitochondrion outer membrane and plasma membrane. The channel adopts an open conformation at zero mV and a closed conformation at both positive and negative potentials. There are two populations of channels; the main that functions in a lower open-state conductance with lower ion selectivity, that switch, in a voltage-dependent manner, from the open to a low-conducting 'closed' state and the other that has a normal ion selectivity in the typical high conductance, 'open' state. Binds various lipids, including the sphingolipid ceramide, the phospholipid phosphatidylcholine, and the sterols cholesterol and oxysterol. Binding of ceramide promotes the mitochondrial outer membrane permeabilization (MOMP) apoptotic pathway. Functionally, catalyzes the scrambling of phospholipids across the outer mitochondrial membrane; the mechanism is unrelated to channel activity and is capable of translocating both anionic and zwitterionic phospholipids. The polypeptide is Non-selective voltage-gated ion channel VDAC2 (Mus musculus (Mouse)).